A 229-amino-acid polypeptide reads, in one-letter code: Peptidase E (229 aa).

Residues Ser-120, Asp-135, and His-157 each act as charge relay system in the active site.

This sequence belongs to the peptidase S51 family.

The protein localises to the cytoplasm. It carries out the reaction Dipeptidase E catalyzes the hydrolysis of dipeptides Asp-|-Xaa. It does not act on peptides with N-terminal Glu, Asn or Gln, nor does it cleave isoaspartyl peptides.. Hydrolyzes dipeptides containing N-terminal aspartate residues. May play a role in allowing the cell to use peptide aspartate to spare carbon otherwise required for the synthesis of the aspartate family of amino acids. The protein is Peptidase E of Salmonella arizonae (strain ATCC BAA-731 / CDC346-86 / RSK2980).